The following is a 524-amino-acid chain: uncharacterized protein (524 aa).

Residues 1–26 form the signal peptide; that stretch reads MLKIDMWFKLKSLGFSLISLQALLAS. Cys-27 is lipidated: N-palmitoyl cysteine. The S-diacylglycerol cysteine moiety is linked to residue Cys-27. A disordered region spans residues 37–68; that stretch reads IEEKNDSTTDNNATPFKDEQSDQGTEVNQQPK. Polar residues predominate over residues 58 to 68; that stretch reads DQGTEVNQQPK.

The protein belongs to the MG067/MG068/MG395 family.

Its subcellular location is the cell membrane. This is an uncharacterized protein from Mycoplasma genitalium (strain ATCC 33530 / DSM 19775 / NCTC 10195 / G37) (Mycoplasmoides genitalium).